Reading from the N-terminus, the 589-residue chain is Protein PAF1 homolog (589 aa).

Residues 1-54 (MASYRPPYPPLPQPPSQNSLAPPPPPPSLPPPVPPPPPSHQPYSYPPPPPPPPH) are compositionally biased toward pro residues. Disordered regions lie at residues 1-180 (MASY…PLLT) and 542-589 (GVYS…DYSE). The span at 55-65 (AYYQQGPHYPQ) shows a compositional bias: low complexity. Residues 71-87 (APPPPPPPSAPPPLVPD) show a composition bias toward pro residues. The span at 88–116 (PPRHQGPNDHEKGASKQVGRRERAKPDPS) shows a compositional bias: basic and acidic residues. Residues 117-127 (KHHHRSHLPHS) are compositionally biased toward basic residues. Positions 126–159 (HSKKIETEEERRLRKKRELEKQRQDEKHRQQMKN) form a coiled coil. The segment covering 128-154 (KKIETEEERRLRKKRELEKQRQDEKHR) has biased composition (basic and acidic residues).

Belongs to the PAF1 family. Component of the nuclear PAF1 complex (PAF1C), which consists of VIP2/ELF7/PAF1, VIP3/SKI8/WDR61, VIP4/LEO1, VIP5/RTF1, VIP6/ELF8/CTR9 and CDC73. As to expression, expressed in roots, leaves and shoot apex.

The protein localises to the nucleus. Component of the PAF1 complex (PAF1C) which is involved in histone modifications such as methylation on histone H3 'Lys-4' (H3K4me3). Involved in regulation of flowering time. Required for the expression of the flowering repressors and MAD-box genes FLC, AGL27/FLM and AGL31/MAF2. Required for histone H3 trimethylation on 'Lys-4' H3K4me3 at the FLC and AGL27/FLM loci. Involved in the control of seed dormancy and germination. The sequence is that of Protein PAF1 homolog from Arabidopsis thaliana (Mouse-ear cress).